Here is a 169-residue protein sequence, read N- to C-terminus: Cilia- and flagella-associated protein 68 (169 aa).

Mn stretches follow at residues 98-109 and 139-149; these read TTYDTSYNNRRP and KSTYMTSYSKP.

Belongs to the CFAP68 family. In terms of assembly, microtubule inner protein component of sperm flagellar doublet microtubules.

The protein localises to the cytoplasm. It localises to the cytoskeleton. It is found in the cilium axoneme. Its subcellular location is the flagellum axoneme. The protein resides in the nucleus. The protein localises to the cell projection. It localises to the cilium. In terms of biological role, microtubule inner protein (MIP) part of the dynein-decorated doublet microtubules (DMTs) in cilia axoneme, which is required for motile cilia beating. This chain is Cilia- and flagella-associated protein 68 (CFAP68), found in Bos taurus (Bovine).